The primary structure comprises 198 residues: Probable GTP-binding protein EngB (198 aa).

In terms of domain architecture, EngB-type G spans 21–195 (NFSEVAFLGR…EDIIIDQTLG (175 aa)). GTP contacts are provided by residues 29–36 (GRSNVGKS), 56–60 (GKTQL), 81–84 (DLPG), 151–154 (TKCD), and 174–176 (VSN). Mg(2+) contacts are provided by serine 36 and threonine 58.

The protein belongs to the TRAFAC class TrmE-Era-EngA-EngB-Septin-like GTPase superfamily. EngB GTPase family. Mg(2+) is required as a cofactor.

In terms of biological role, necessary for normal cell division and for the maintenance of normal septation. The polypeptide is Probable GTP-binding protein EngB (Campylobacter jejuni subsp. jejuni serotype O:6 (strain 81116 / NCTC 11828)).